A 33-amino-acid chain; its full sequence is Cytochrome b6-f complex subunit 8 (33 aa).

A helical transmembrane segment spans residues 2–22; it reads LFTIAWASLAAVFSFSIAMVV.

Belongs to the PetN family. As to quaternary structure, the 4 large subunits of the cytochrome b6-f complex are cytochrome b6, subunit IV (17 kDa polypeptide, PetD), cytochrome f and the Rieske protein, while the 4 small subunits are PetG, PetL, PetM and PetN. The complex functions as a dimer.

Its subcellular location is the cellular thylakoid membrane. Component of the cytochrome b6-f complex, which mediates electron transfer between photosystem II (PSII) and photosystem I (PSI), cyclic electron flow around PSI, and state transitions. The polypeptide is Cytochrome b6-f complex subunit 8 (Synechococcus sp. (strain CC9311)).